The chain runs to 389 residues: MALVQPHGGKLTPVLAPKEQRAELKAKAEKLPVIRMSSRESSDCLMLGMGAFSPLTGFMTQADYQGVIDNMHLASGLAWPLPVTLAVTKDQAASIEVGQELALVDDETDIYVGIIKVADKYEYDKVKECKATFFTDDADHPGVQKVMSQGEVYLGGDIVTFSEMGYATKYAGYYAHPAETRALFESKGWSTVCAFQTRNPLHRSHEFLCKIGNEVCDGLFLHPIVGKLKKGDIPAEVRFECYKAHMENYFNPATIEMRVYPMEMRYAGPKEAILHAIFRQNFGCSHILVGRDHAGVGSYYTAYQAQEIFDEFKPGEILCQPIKVTASYYCKKCMGMATEKTCPHTKEDRIAISGTKVREMFSKGELPPLEFGRKEVLEILTKYYQSLEK.

The protein belongs to the sulfate adenylyltransferase family.

The catalysed reaction is sulfate + ATP + H(+) = adenosine 5'-phosphosulfate + diphosphate. It functions in the pathway sulfur metabolism; hydrogen sulfide biosynthesis; sulfite from sulfate: step 1/3. This Desulforamulus reducens (strain ATCC BAA-1160 / DSM 100696 / MI-1) (Desulfotomaculum reducens) protein is Sulfate adenylyltransferase.